A 297-amino-acid polypeptide reads, in one-letter code: HTH-type transcriptional regulator ArgP (297 aa).

The HTH lysR-type domain occupies 4–60 (PDYRTLQALDAVIRERGFERAAQKLCITQSAVSQRIKQLENMFGQPLLVRTVPPRPT). Positions 21–40 (FERAAQKLCITQSAVSQRIK) form a DNA-binding region, H-T-H motif.

This sequence belongs to the LysR transcriptional regulatory family. As to quaternary structure, homodimer.

In terms of biological role, controls the transcription of genes involved in arginine and lysine metabolism. This chain is HTH-type transcriptional regulator ArgP, found in Klebsiella pneumoniae subsp. pneumoniae (strain ATCC 700721 / MGH 78578).